A 149-amino-acid chain; its full sequence is Ribosome maturation factor RimP (149 aa).

This sequence belongs to the RimP family.

Its subcellular location is the cytoplasm. Required for maturation of 30S ribosomal subunits. The chain is Ribosome maturation factor RimP from Clostridium acetobutylicum (strain ATCC 824 / DSM 792 / JCM 1419 / IAM 19013 / LMG 5710 / NBRC 13948 / NRRL B-527 / VKM B-1787 / 2291 / W).